The following is an 83-amino-acid chain: Short neurotoxin 3FTx-Oxy4 (83 aa).

A signal peptide spans 1–21 (MKTLLLTLVVVTIVCLDLGYT). Cystine bridges form between cysteine 24-cysteine 45, cysteine 38-cysteine 62, cysteine 64-cysteine 75, and cysteine 76-cysteine 81.

It belongs to the three-finger toxin family. Short-chain subfamily. Type I alpha-neurotoxin sub-subfamily. Expressed by the venom gland.

The protein resides in the secreted. Its function is as follows. Binds to muscle nicotinic acetylcholine receptor (nAChR) and inhibit acetylcholine from binding to the receptor, thereby impairing neuromuscular transmission. The protein is Short neurotoxin 3FTx-Oxy4 of Oxyuranus microlepidotus (Inland taipan).